Here is a 355-residue protein sequence, read N- to C-terminus: Elongation factor Ts (355 aa).

The involved in Mg(2+) ion dislocation from EF-Tu stretch occupies residues 82–85; it reads TDFV.

It belongs to the EF-Ts family.

It is found in the cytoplasm. In terms of biological role, associates with the EF-Tu.GDP complex and induces the exchange of GDP to GTP. It remains bound to the aminoacyl-tRNA.EF-Tu.GTP complex up to the GTP hydrolysis stage on the ribosome. This is Elongation factor Ts from Wolinella succinogenes (strain ATCC 29543 / DSM 1740 / CCUG 13145 / JCM 31913 / LMG 7466 / NCTC 11488 / FDC 602W) (Vibrio succinogenes).